We begin with the raw amino-acid sequence, 197 residues long: ATP-dependent Clp protease proteolytic subunit 1 (197 aa).

H126 is a catalytic residue.

It belongs to the peptidase S14 family. Fourteen ClpP subunits assemble into 2 heptameric rings which stack back to back to give a disk-like structure with a central cavity, resembling the structure of eukaryotic proteasomes.

The protein resides in the cytoplasm. It carries out the reaction Hydrolysis of proteins to small peptides in the presence of ATP and magnesium. alpha-casein is the usual test substrate. In the absence of ATP, only oligopeptides shorter than five residues are hydrolyzed (such as succinyl-Leu-Tyr-|-NHMec, and Leu-Tyr-Leu-|-Tyr-Trp, in which cleavage of the -Tyr-|-Leu- and -Tyr-|-Trp bonds also occurs).. In terms of biological role, cleaves peptides in various proteins in a process that requires ATP hydrolysis. Has a chymotrypsin-like activity. Plays a major role in the degradation of misfolded proteins. This chain is ATP-dependent Clp protease proteolytic subunit 1, found in Nocardia farcinica (strain IFM 10152).